Reading from the N-terminus, the 132-residue chain is MAKTQRLDIVTPEKVVFSEEIDFVVAPGADGELGILPEHAPLVTALKVGTLRVQQGGKFFKVAVSGGFMEVKNSRIVVLADTAERADQIDVERAKAAKQRAEQRLNSKGSEIDVHRAEIALHKAINRIKAAE.

Belongs to the ATPase epsilon chain family. In terms of assembly, F-type ATPases have 2 components, CF(1) - the catalytic core - and CF(0) - the membrane proton channel. CF(1) has five subunits: alpha(3), beta(3), gamma(1), delta(1), epsilon(1). CF(0) has three main subunits: a, b and c.

The protein localises to the cell membrane. In terms of biological role, produces ATP from ADP in the presence of a proton gradient across the membrane. The chain is ATP synthase epsilon chain from Desulforamulus reducens (strain ATCC BAA-1160 / DSM 100696 / MI-1) (Desulfotomaculum reducens).